Here is a 347-residue protein sequence, read N- to C-terminus: Dihydroorotase (347 aa).

Positions 17 and 19 each coordinate Zn(2+). Substrate-binding positions include 19–21 and Asn-45; that span reads HLR. 3 residues coordinate Zn(2+): Lys-103, His-140, and His-178. Lys-103 bears the N6-carboxylysine mark. His-140 provides a ligand contact to substrate. Leu-223 is a binding site for substrate. Asp-251 contributes to the Zn(2+) binding site. Asp-251 is a catalytic residue. 2 residues coordinate substrate: His-255 and Ala-267.

This sequence belongs to the metallo-dependent hydrolases superfamily. DHOase family. Class II DHOase subfamily. As to quaternary structure, homodimer. Zn(2+) is required as a cofactor.

It catalyses the reaction (S)-dihydroorotate + H2O = N-carbamoyl-L-aspartate + H(+). It participates in pyrimidine metabolism; UMP biosynthesis via de novo pathway; (S)-dihydroorotate from bicarbonate: step 3/3. Catalyzes the reversible cyclization of carbamoyl aspartate to dihydroorotate. The polypeptide is Dihydroorotase (Citrobacter koseri (strain ATCC BAA-895 / CDC 4225-83 / SGSC4696)).